Consider the following 227-residue polypeptide: Ubiquitin domain-containing protein 1 (227 aa).

Residues 1–42 (MGNCVGRQRRERPAAPGHPRKRAGRNEPLKKERLKWKSDYPM) form a disordered region. Residues 24-38 (GRNEPLKKERLKWKS) show a composition bias toward basic and acidic residues. One can recognise a Ubiquitin-like domain in the interval 149–224 (FPLKVRLSTG…IQVIINQPPP (76 aa)).

As to quaternary structure, interacts with UBTD1.

In terms of biological role, may be involved in the regulation of cellular senescence through a positive feedback loop with TP53. Is a TP53 downstream target gene that increases the stability of TP53 protein by promoting the ubiquitination and degradation of MDM2. The sequence is that of Ubiquitin domain-containing protein 1 (Ubtd1) from Mus musculus (Mouse).